The following is a 240-amino-acid chain: Large ribosomal subunit protein uL2 (240 aa).

A compositionally biased stretch (polar residues) spans Met-1 to Pro-20. 2 disordered regions span residues Met-1–Phe-33 and Pro-204–Arg-240. Basic residues-rich tracts occupy residues Thr-21 to Tyr-30 and Ser-224 to Arg-240.

It belongs to the universal ribosomal protein uL2 family. Part of the 50S ribosomal subunit. Forms a bridge to the 30S subunit in the 70S ribosome.

One of the primary rRNA binding proteins. Required for association of the 30S and 50S subunits to form the 70S ribosome, for tRNA binding and peptide bond formation. It has been suggested to have peptidyltransferase activity; this is somewhat controversial. Makes several contacts with the 16S rRNA in the 70S ribosome. The sequence is that of Large ribosomal subunit protein uL2 from Methanococcus aeolicus (strain ATCC BAA-1280 / DSM 17508 / OCM 812 / Nankai-3).